Here is a 456-residue protein sequence, read N- to C-terminus: Protein odr-4 homolog (456 aa).

Residues 374–401 (IESSKNNNNNNNNNNNNNNNNNNNNSKL) are compositionally biased toward low complexity. A disordered region spans residues 374–403 (IESSKNNNNNNNNNNNNNNNNNNNNSKLSN). A helical membrane pass occupies residues 436–456 (YLIIIISVLVLMVAFYFKFFV).

Belongs to the ODR-4 family.

Its subcellular location is the membrane. Functionally, may play a role in the trafficking of a subset of G-protein coupled receptors. This is Protein odr-4 homolog from Dictyostelium discoideum (Social amoeba).